The primary structure comprises 556 residues: (S)-N-methylcanadine 1-hydroxylase CYP82Y1 (556 aa).

A helical membrane pass occupies residues 18-38 (TAVGTLILAFLLTLSPVIIYY). Position 500 (C500) interacts with heme.

It belongs to the cytochrome P450 family. Requires heme as cofactor. Highly expressed in capsules. Expressed is stems.

Its subcellular location is the membrane. It carries out the reaction (S)-cis-N-methylcanadine + reduced [NADPH--hemoprotein reductase] + O2 = (S)-1-hydroxy-N-methylcanadine + oxidized [NADPH--hemoprotein reductase] + H2O + H(+). The protein operates within alkaloid biosynthesis. Its function is as follows. Cytochrome P450 involved in the biosynthesis of the benzylisoquinoline alkaloid noscapine. Converts (S)-N-methylcanadine to (S)-1-hydroxy-N-methylcanadine. This is (S)-N-methylcanadine 1-hydroxylase CYP82Y1 from Papaver somniferum (Opium poppy).